A 67-amino-acid chain; its full sequence is Minor structural pilin EpdD (67 aa).

The propeptide occupies 1–13; the sequence is MSVALKKFFSKRG. A QXSXEXXXL motif is present at residues 14–22; sequence QLSLEFSVL.

In terms of processing, the N-terminus is cleaved by the prepilin peptidase EppA, which recognizes the class III signal sequence. N-glycosylated. Glycosylation is AglB-dependent. The N-glycosylation does not occur unless the signal peptide has been cleaved first.

Its subcellular location is the secreted. The protein localises to the cell surface. It localises to the fimbrium. Minor component of the type IV-like pili. Essential for pili formation. The protein is Minor structural pilin EpdD of Methanococcus maripaludis (strain DSM 14266 / JCM 13030 / NBRC 101832 / S2 / LL).